Here is a 174-residue protein sequence, read N- to C-terminus: RNA pyrophosphohydrolase (174 aa).

Residues 6 to 149 (GFRANVGIII…KRDVYRKVMK (144 aa)) form the Nudix hydrolase domain. The Nudix box motif lies at 38-59 (GGVDDGESAEEAMYRELYEEVG).

This sequence belongs to the Nudix hydrolase family. RppH subfamily. The cofactor is a divalent metal cation.

Its function is as follows. Accelerates the degradation of transcripts by removing pyrophosphate from the 5'-end of triphosphorylated RNA, leading to a more labile monophosphorylated state that can stimulate subsequent ribonuclease cleavage. The polypeptide is RNA pyrophosphohydrolase (Shewanella sp. (strain ANA-3)).